The primary structure comprises 380 residues: Cytochrome b (380 aa).

Helical transmembrane passes span 34–54 (FGSL…LLAM), 78–99 (WLIR…YLHI), 114–134 (WNTG…GYVL), and 179–199 (FFAL…IHLT). Residues H84 and H98 each coordinate heme b. Heme b-binding residues include H183 and H197. Residue H202 participates in a ubiquinone binding. Transmembrane regions (helical) follow at residues 227–247 (LKDI…ALFS), 289–309 (LGGV…PFLH), 321–341 (LSQL…WVGS), and 348–368 (FIII…ILFP).

It belongs to the cytochrome b family. In terms of assembly, the cytochrome bc1 complex contains 11 subunits: 3 respiratory subunits (MT-CYB, CYC1 and UQCRFS1), 2 core proteins (UQCRC1 and UQCRC2) and 6 low-molecular weight proteins (UQCRH/QCR6, UQCRB/QCR7, UQCRQ/QCR8, UQCR10/QCR9, UQCR11/QCR10 and a cleavage product of UQCRFS1). This cytochrome bc1 complex then forms a dimer. Requires heme b as cofactor.

The protein localises to the mitochondrion inner membrane. Functionally, component of the ubiquinol-cytochrome c reductase complex (complex III or cytochrome b-c1 complex) that is part of the mitochondrial respiratory chain. The b-c1 complex mediates electron transfer from ubiquinol to cytochrome c. Contributes to the generation of a proton gradient across the mitochondrial membrane that is then used for ATP synthesis. The protein is Cytochrome b (MT-CYB) of Calonectris leucomelas (Streaked shearwater).